A 303-amino-acid chain; its full sequence is Methyltransferase ktnA (303 aa).

The protein belongs to the class I-like SAM-binding methyltransferase superfamily. It depends on S-adenosyl-L-methionine as a cofactor.

Non-reducing polyketide synthase; part of the gene cluster that mediates the biosynthesis of the bicoumarin kotanin. The non-reducing polyketide synthase ktnS first catalyzes the formation of the pentaketidic 4,7-dihydroxy-5-methylcoumarin from acetyl coenzyme A and 4 malonyl coenzyme A molecules. Further O-methylation by ktnB leads to the formation of 7-demethylsiderin. Then, an oxidative phenol coupling catalyzed by the cytochrome P450 monooxygenase ktnC forms the 8,8'-dimer P-orlandin via dimerization the monomeric precursor, 7-demethylsiderin. P-orlandin is subsequently O-methylated in a stepwise fashion to demethylkotanin and kotanin. The function of ktnA within the pathway has not been determined yet. The chain is Methyltransferase ktnA from Aspergillus niger (strain ATCC MYA-4892 / CBS 513.88 / FGSC A1513).